Reading from the N-terminus, the 112-residue chain is Toxin-like structure LSTX-D10 (112 aa).

A signal peptide spans 1–20 (MMKVLVVVALLVTLISYSSS). Positions 21-41 (EGIDDLEADELLSLMANEQTR) are excised as a propeptide. Intrachain disulfides connect Cys-45/Cys-60, Cys-52/Cys-69, Cys-59/Cys-84, and Cys-71/Cys-82.

It belongs to the neurotoxin 19 (CSTX) family. 01 subfamily. As to expression, expressed by the venom gland.

The protein localises to the secreted. This is Toxin-like structure LSTX-D10 from Lycosa singoriensis (Wolf spider).